Here is an 82-residue protein sequence, read N- to C-terminus: Small ribosomal subunit protein bS16 (82 aa).

It belongs to the bacterial ribosomal protein bS16 family.

This chain is Small ribosomal subunit protein bS16, found in Serratia proteamaculans (strain 568).